A 68-amino-acid chain; its full sequence is Conotoxin Cal12.1p1 (68 aa).

The propeptide occupies 1–23 (DLITNSYTRGKPRHVTSWRNLRT).

Contains 4 disulfide bonds. In terms of tissue distribution, expressed by the venom duct.

It is found in the secreted. The polypeptide is Conotoxin Cal12.1p1 (Californiconus californicus (California cone)).